The sequence spans 540 residues: Putative rhamnogalacturonase (540 aa).

Positions 1–23 are cleaved as a signal peptide; the sequence is MGFLTLFHMAFLAVSLFVSGALA. 2 disulfide bridges follow: C53–C100 and C192–C203. N-linked (GlcNAc...) asparagine glycosylation occurs at N89. Residue N368 is glycosylated (N-linked (GlcNAc...) asparagine).

The protein belongs to the polysaccharide lyase 4 family.

It localises to the secreted. It catalyses the reaction Endotype eliminative cleavage of L-alpha-rhamnopyranosyl-(1-&gt;4)-alpha-D-galactopyranosyluronic acid bonds of rhamnogalacturonan I domains in ramified hairy regions of pectin leaving L-rhamnopyranose at the reducing end and 4-deoxy-4,5-unsaturated D-galactopyranosyluronic acid at the non-reducing end.. Its function is as follows. Could be a pectinolytic enzyme that hydrolyzes the alpha-L-rhamnopyranosyl-(1,4)-alpha-D-galacturonopyranosyl glycosidic linkage by beta-elimination, thereby generating oligosaccharides terminating at the non-reducing end with a hex-4-enopyranosyluronic acid residue. In Neurospora crassa (strain ATCC 24698 / 74-OR23-1A / CBS 708.71 / DSM 1257 / FGSC 987), this protein is Putative rhamnogalacturonase (asd-1).